Consider the following 276-residue polypeptide: Large ribosomal subunit protein uL2 (276 aa).

Disordered regions lie at residues 35–55 and 222–276; these read APLH…RHQG and GSVM…RRKK. Residues 258 to 276 show a composition bias toward basic residues; sequence KTRKKNKHSDKYIVRRRKK.

This sequence belongs to the universal ribosomal protein uL2 family. In terms of assembly, part of the 50S ribosomal subunit. Forms a bridge to the 30S subunit in the 70S ribosome.

Functionally, one of the primary rRNA binding proteins. Required for association of the 30S and 50S subunits to form the 70S ribosome, for tRNA binding and peptide bond formation. It has been suggested to have peptidyltransferase activity; this is somewhat controversial. Makes several contacts with the 16S rRNA in the 70S ribosome. This is Large ribosomal subunit protein uL2 from Shouchella clausii (strain KSM-K16) (Alkalihalobacillus clausii).